The chain runs to 341 residues: Pyrophosphate--fructose 6-phosphate 1-phosphotransferase (341 aa).

Glycine 10 provides a ligand contact to diphosphate. Glutamate 103 lines the Mg(2+) pocket. Residues 125-127 (TID), arginine 162, 169-171 (MGR), glutamate 221, arginine 265, and 271-274 (HVQR) each bind substrate. The Proton acceptor role is filled by aspartate 127.

Belongs to the phosphofructokinase type A (PFKA) family. Mixed-substrate PFK group III subfamily. Homodimer or homotetramer. Mg(2+) serves as cofactor.

The protein resides in the cytoplasm. The enzyme catalyses beta-D-fructose 6-phosphate + diphosphate = beta-D-fructose 1,6-bisphosphate + phosphate + H(+). The protein operates within carbohydrate degradation; glycolysis; D-glyceraldehyde 3-phosphate and glycerone phosphate from D-glucose: step 3/4. With respect to regulation, non-allosteric. Catalyzes the phosphorylation of D-fructose 6-phosphate, the first committing step of glycolysis. Uses inorganic phosphate (PPi) as phosphoryl donor instead of ATP like common ATP-dependent phosphofructokinases (ATP-PFKs), which renders the reaction reversible, and can thus function both in glycolysis and gluconeogenesis. Consistently, PPi-PFK can replace the enzymes of both the forward (ATP-PFK) and reverse (fructose-bisphosphatase (FBPase)) reactions. The chain is Pyrophosphate--fructose 6-phosphate 1-phosphotransferase from Amycolatopsis mediterranei (strain S699) (Nocardia mediterranei).